The chain runs to 416 residues: Heat shock protein DDB_G0280215 (416 aa).

A sHSP domain is found at 37 to 150 (SMDWGWKPRM…SQHISLFGRE (114 aa)). The interval 216–235 (ETKERERRIRDTKGETEKKK) is disordered.

Belongs to the small heat shock protein (HSP20) family.

The chain is Heat shock protein DDB_G0280215 from Dictyostelium discoideum (Social amoeba).